The sequence spans 187 residues: Large ribosomal subunit protein uL22 (187 aa).

The disordered stretch occupies residues 161–187 (APTDDAPAKKKLSKKKLARQKEKMMRE). Residues 169-178 (KKKLSKKKLA) are compositionally biased toward basic residues.

This sequence belongs to the universal ribosomal protein uL22 family.

The chain is Large ribosomal subunit protein uL22 (RpL17) from Bombyx mori (Silk moth).